Consider the following 454-residue polypeptide: Noelin-2 (454 aa).

Positions 1 to 20 (MWPLTVPPPLLLLLCSGLAG) are cleaved as a signal peptide. Coiled-coil stretches lie at residues 58–85 (RDGR…LELR) and 136–193 (LEQY…AQKL). N-linked (GlcNAc...) asparagine glycosylation is found at Asn-74, Asn-155, Asn-275, Asn-310, Asn-399, and Asn-441. The Olfactomedin-like domain maps to 194-446 (GCGKLTGVSN…QVLYNVTLFH (253 aa)). Cys-195 and Cys-377 are disulfide-bonded.

Peripherally associated with AMPAR complex. AMPAR complex consists of an inner core made of 4 pore-forming GluA/GRIA proteins (GRIA1, GRIA2, GRIA3 and GRIA4) and 4 major auxiliary subunits arranged in a twofold symmetry. One of the two pairs of distinct binding sites is occupied either by CNIH2, CNIH3 or CACNG2, CACNG3. The other harbors CACNG2, CACNG3, CACNG4, CACNG8 or GSG1L. This inner core of AMPAR complex is complemented by outer core constituents binding directly to the GluA/GRIA proteins at sites distinct from the interaction sites of the inner core constituents. Outer core constituents include at least PRRT1, PRRT2, CKAMP44/SHISA9, FRRS1L and NRN1. The proteins of the inner and outer core serve as a platform for other, more peripherally associated AMPAR constituents, including OLFM2. Alone or in combination, these auxiliary subunits control the gating and pharmacology of the AMPAR complex and profoundly impact their biogenesis and protein processing. Interacts with GRIA2. Interacts with OLFM1 and OLFM3. Interacts with SRF; the interaction promotes dissociation of SRF from the transcriptional repressor HEY2. Interacts with RUNX2. N-glycosylated. In terms of tissue distribution, expressed in aortic smooth muscle (at protein level). In the fetus, expressed in the brain and ocular tissues including lens vesicle and optic cup.

It localises to the secreted. The protein resides in the synapse. It is found in the membrane. Its subcellular location is the nucleus. The protein localises to the cytoplasm. Functionally, involved in transforming growth factor beta (TGF-beta)-induced smooth muscle differentiation. TGF-beta induces expression and translocation of OLFM2 to the nucleus where it binds to SRF, causing its dissociation from the transcriptional repressor HEY2/HERP1 and facilitating binding of SRF to target genes. Plays a role in AMPAR complex organization. Is a regulator of vascular smooth-muscle cell (SMC) phenotypic switching, that acts by promoting RUNX2 and inhibiting MYOCD binding to SRF. SMC phenotypic switching is the process through which vascular SMCs undergo transition between a quiescent contractile phenotype and a proliferative synthetic phenotype in response to pathological stimuli. SMC phenotypic plasticity is essential for vascular development and remodeling. The chain is Noelin-2 (OLFM2) from Homo sapiens (Human).